Reading from the N-terminus, the 346-residue chain is Very-long-chain 3-oxoacyl-CoA reductase (346 aa).

A helical transmembrane segment spans residues 26–46; that stretch reads GASALLAAGSLFVVSRALVFV. NADP(+)-binding residues include Val71, Asp126, Asp134, Asn153, Tyr220, Lys224, Ile253, and Ser255. Tyr220 serves as the catalytic Proton donor. The active-site Lowers pKa of active site Tyr is the Lys224.

It belongs to the short-chain dehydrogenases/reductases (SDR) family.

The protein resides in the endoplasmic reticulum membrane. The enzyme catalyses a very-long-chain (3R)-3-hydroxyacyl-CoA + NADP(+) = a very-long-chain 3-oxoacyl-CoA + NADPH + H(+). Its pathway is lipid metabolism; fatty acid biosynthesis. Component of the microsomal membrane bound fatty acid elongation system, which produces the 26-carbon very long-chain fatty acids (VLCFA) from palmitate. Catalyzes the reduction of the 3-ketoacyl-CoA intermediate that is formed in each cycle of fatty acid elongation. VLCFAs serve as precursors for ceramide and sphingolipids. This chain is Very-long-chain 3-oxoacyl-CoA reductase, found in Aspergillus niger (strain ATCC MYA-4892 / CBS 513.88 / FGSC A1513).